The chain runs to 415 residues: Esterase FrsA (415 aa).

The protein belongs to the FrsA family.

It carries out the reaction a carboxylic ester + H2O = an alcohol + a carboxylate + H(+). Functionally, catalyzes the hydrolysis of esters. This chain is Esterase FrsA, found in Yersinia pseudotuberculosis serotype O:1b (strain IP 31758).